Consider the following 166-residue polypeptide: RNA pyrophosphohydrolase (166 aa).

The Nudix hydrolase domain occupies proline 8 to lysine 158. The Nudix box signature appears at glycine 47 to asparagine 68.

This sequence belongs to the Nudix hydrolase family. RppH subfamily. It depends on a divalent metal cation as a cofactor.

Accelerates the degradation of transcripts by removing pyrophosphate from the 5'-end of triphosphorylated RNA, leading to a more labile monophosphorylated state that can stimulate subsequent ribonuclease cleavage. The sequence is that of RNA pyrophosphohydrolase from Afipia carboxidovorans (strain ATCC 49405 / DSM 1227 / KCTC 32145 / OM5) (Oligotropha carboxidovorans).